A 446-amino-acid polypeptide reads, in one-letter code: Tubulin beta-5 chain (446 aa).

The MREI motif motif lies at M1 to I4. Q11, E69, S138, G142, T143, G144, N204, and N226 together coordinate GTP. E69 is a Mg(2+) binding site. E438 carries the post-translational modification 5-glutamyl polyglutamate.

Belongs to the tubulin family. In terms of assembly, dimer of alpha and beta chains. A typical microtubule is a hollow water-filled tube with an outer diameter of 25 nm and an inner diameter of 15 nM. Alpha-beta heterodimers associate head-to-tail to form protofilaments running lengthwise along the microtubule wall with the beta-tubulin subunit facing the microtubule plus end conferring a structural polarity. Microtubules usually have 13 protofilaments but different protofilament numbers can be found in some organisms and specialized cells. It depends on Mg(2+) as a cofactor. Some glutamate residues at the C-terminus are polyglycylated, resulting in polyglycine chains on the gamma-carboxyl group. Glycylation is mainly limited to tubulin incorporated into axonemes (cilia and flagella) whereas glutamylation is prevalent in neuronal cells, centrioles, axonemes, and the mitotic spindle. Both modifications can coexist on the same protein on adjacent residues, and lowering polyglycylation levels increases polyglutamylation, and reciprocally. The precise function of polyglycylation is still unclear. Post-translationally, some glutamate residues at the C-terminus are polyglutamylated, resulting in polyglutamate chains on the gamma-carboxyl group. Polyglutamylation plays a key role in microtubule severing by spastin (SPAST). SPAST preferentially recognizes and acts on microtubules decorated with short polyglutamate tails: severing activity by SPAST increases as the number of glutamates per tubulin rises from one to eight, but decreases beyond this glutamylation threshold.

The protein resides in the cytoplasm. It is found in the cytoskeleton. Functionally, tubulin is the major constituent of microtubules, a cylinder consisting of laterally associated linear protofilaments composed of alpha- and beta-tubulin heterodimers. Microtubules grow by the addition of GTP-tubulin dimers to the microtubule end, where a stabilizing cap forms. Below the cap, tubulin dimers are in GDP-bound state, owing to GTPase activity of alpha-tubulin. This chain is Tubulin beta-5 chain, found in Gallus gallus (Chicken).